The chain runs to 274 residues: Orotidine 5'-phosphate decarboxylase (274 aa).

Substrate contacts are provided by residues aspartate 40, 62-64, 93-102, tyrosine 227, and arginine 245; these read KTH and DRKFIDIGNT. Lysine 95 (proton donor) is an active-site residue.

The protein belongs to the OMP decarboxylase family.

It carries out the reaction orotidine 5'-phosphate + H(+) = UMP + CO2. Its pathway is pyrimidine metabolism; UMP biosynthesis via de novo pathway; UMP from orotate: step 2/2. In Emericella nidulans (strain FGSC A4 / ATCC 38163 / CBS 112.46 / NRRL 194 / M139) (Aspergillus nidulans), this protein is Orotidine 5'-phosphate decarboxylase (pyrG).